A 295-amino-acid polypeptide reads, in one-letter code: Tyrosine recombinase XerD (295 aa).

A Core-binding (CB) domain is found at 1-85 (METIIEEYLR…TIRSFHQFAI (85 aa)). The region spanning 106-289 (KLPDVLNVDE…SKSQIRKMYN (184 aa)) is the Tyr recombinase domain. Catalysis depends on residues arginine 146, lysine 170, histidine 241, arginine 244, and histidine 267. Catalysis depends on tyrosine 276, which acts as the O-(3'-phospho-DNA)-tyrosine intermediate.

Belongs to the 'phage' integrase family. XerD subfamily. In terms of assembly, forms a cyclic heterotetrameric complex composed of two molecules of XerC and two molecules of XerD.

It localises to the cytoplasm. In terms of biological role, site-specific tyrosine recombinase, which acts by catalyzing the cutting and rejoining of the recombining DNA molecules. The XerC-XerD complex is essential to convert dimers of the bacterial chromosome into monomers to permit their segregation at cell division. It also contributes to the segregational stability of plasmids. In Staphylococcus aureus (strain COL), this protein is Tyrosine recombinase XerD.